We begin with the raw amino-acid sequence, 299 residues long: 33 kDa chaperonin (299 aa).

2 disulfide bridges follow: C239–C241 and C272–C275.

The protein belongs to the HSP33 family. Post-translationally, under oxidizing conditions two disulfide bonds are formed involving the reactive cysteines. Under reducing conditions zinc is bound to the reactive cysteines and the protein is inactive.

It localises to the cytoplasm. Its function is as follows. Redox regulated molecular chaperone. Protects both thermally unfolding and oxidatively damaged proteins from irreversible aggregation. Plays an important role in the bacterial defense system toward oxidative stress. This is 33 kDa chaperonin from Acaryochloris marina (strain MBIC 11017).